The chain runs to 496 residues: Bifunctional protein HldE (496 aa).

The tract at residues 1 to 335 is ribokinase; that stretch reads MIKHNPPSPE…GALFRSHGPT (335 aa). 211-214 is an ATP binding site; the sequence is NRKE. Asp-280 is an active-site residue. The tract at residues 363–496 is cytidylyltransferase; sequence FTNGCFDILH…IGKLRAGSTS (134 aa).

This sequence in the N-terminal section; belongs to the carbohydrate kinase PfkB family. In the C-terminal section; belongs to the cytidylyltransferase family. In terms of assembly, homodimer.

The catalysed reaction is D-glycero-beta-D-manno-heptose 7-phosphate + ATP = D-glycero-beta-D-manno-heptose 1,7-bisphosphate + ADP + H(+). It catalyses the reaction D-glycero-beta-D-manno-heptose 1-phosphate + ATP + H(+) = ADP-D-glycero-beta-D-manno-heptose + diphosphate. It functions in the pathway nucleotide-sugar biosynthesis; ADP-L-glycero-beta-D-manno-heptose biosynthesis; ADP-L-glycero-beta-D-manno-heptose from D-glycero-beta-D-manno-heptose 7-phosphate: step 1/4. The protein operates within nucleotide-sugar biosynthesis; ADP-L-glycero-beta-D-manno-heptose biosynthesis; ADP-L-glycero-beta-D-manno-heptose from D-glycero-beta-D-manno-heptose 7-phosphate: step 3/4. Its function is as follows. Catalyzes the phosphorylation of D-glycero-D-manno-heptose 7-phosphate at the C-1 position to selectively form D-glycero-beta-D-manno-heptose-1,7-bisphosphate. Catalyzes the ADP transfer from ATP to D-glycero-beta-D-manno-heptose 1-phosphate, yielding ADP-D-glycero-beta-D-manno-heptose. This Mesorhizobium japonicum (strain LMG 29417 / CECT 9101 / MAFF 303099) (Mesorhizobium loti (strain MAFF 303099)) protein is Bifunctional protein HldE.